Consider the following 197-residue polypeptide: Holliday junction branch migration complex subunit RuvA (197 aa).

Residues 1 to 64 form a domain I region; sequence MIALLRGLVV…EDVLALYGFL (64 aa). The segment at 65–143 is domain II; it reads TQDEKALFEK…AATGEEPGAP (79 aa). The interval 144 to 153 is flexible linker; it reads AAEALSPIDQ. Residues 153 to 197 are domain III; sequence QDVLSALLNLGCARPQAEAAVRKAKAAGASLDFEPLFRRALELVR.

The protein belongs to the RuvA family. As to quaternary structure, homotetramer. Forms an RuvA(8)-RuvB(12)-Holliday junction (HJ) complex. HJ DNA is sandwiched between 2 RuvA tetramers; dsDNA enters through RuvA and exits via RuvB. An RuvB hexamer assembles on each DNA strand where it exits the tetramer. Each RuvB hexamer is contacted by two RuvA subunits (via domain III) on 2 adjacent RuvB subunits; this complex drives branch migration. In the full resolvosome a probable DNA-RuvA(4)-RuvB(12)-RuvC(2) complex forms which resolves the HJ.

The protein localises to the cytoplasm. The RuvA-RuvB-RuvC complex processes Holliday junction (HJ) DNA during genetic recombination and DNA repair, while the RuvA-RuvB complex plays an important role in the rescue of blocked DNA replication forks via replication fork reversal (RFR). RuvA specifically binds to HJ cruciform DNA, conferring on it an open structure. The RuvB hexamer acts as an ATP-dependent pump, pulling dsDNA into and through the RuvAB complex. HJ branch migration allows RuvC to scan DNA until it finds its consensus sequence, where it cleaves and resolves the cruciform DNA. The protein is Holliday junction branch migration complex subunit RuvA of Solibacter usitatus (strain Ellin6076).